The sequence spans 798 residues: Acetyl-CoA decarbonylase/synthase complex subunit alpha 2 (798 aa).

Positions 65, 68, 69, 71, 76, and 86 each coordinate [4Fe-4S] cluster. His-109 contacts CO. The [Ni-4Fe-4S] cluster site is built by His-246, Cys-274, and Cys-313. 2 4Fe-4S ferredoxin-type domains span residues 395–424 (EEQF…IGEA) and 434–463 (SKLE…IDMY). 8 residues coordinate [4Fe-4S] cluster: Cys-405, Cys-408, Cys-411, Cys-415, Cys-443, Cys-446, Cys-449, and Cys-453. [Ni-4Fe-4S] cluster-binding residues include Cys-511, Cys-540, and Cys-575.

This sequence belongs to the Ni-containing carbon monoxide dehydrogenase family. In terms of assembly, heterotetramer of two alpha and two epsilon subunits. The ACDS complex is made up of alpha, epsilon, beta, gamma and delta subunits with a probable stoichiometry of (alpha(2)epsilon(2))(4)-beta(8)-(gamma(1)delta(1))(8). [4Fe-4S] cluster is required as a cofactor. The cofactor is [Ni-4Fe-4S] cluster.

The enzyme catalyses CO + 2 oxidized [2Fe-2S]-[ferredoxin] + H2O = 2 reduced [2Fe-2S]-[ferredoxin] + CO2 + 2 H(+). Part of the ACDS complex that catalyzes the reversible cleavage of acetyl-CoA, allowing autotrophic growth from CO(2). The alpha-epsilon subcomponent functions as a carbon monoxide dehydrogenase. This is Acetyl-CoA decarbonylase/synthase complex subunit alpha 2 from Archaeoglobus fulgidus (strain ATCC 49558 / DSM 4304 / JCM 9628 / NBRC 100126 / VC-16).